A 308-amino-acid polypeptide reads, in one-letter code: Cilia- and flagella-associated protein 73 (308 aa).

2 coiled-coil regions span residues 34–143 (RLLE…LEPC) and 175–233 (AALR…WESK).

The protein belongs to the CFAP73 family.

It is found in the cytoplasm. The protein resides in the cytoskeleton. It localises to the cilium axoneme. May play a role in ciliary/flagellar motility by regulating the assembly and the activity of axonemal inner dynein arm. In Homo sapiens (Human), this protein is Cilia- and flagella-associated protein 73.